The sequence spans 67 residues: MPKMKTKSGAKKRFRVRPGGTVKRGQAFKRHILTKKTTKNKRQLRGSVAVHETNMGHMAQMLPGRGI.

A compositionally biased stretch (basic residues) spans 1 to 16 (MPKMKTKSGAKKRFRV). Positions 1 to 24 (MPKMKTKSGAKKRFRVRPGGTVKR) are disordered.

Belongs to the bacterial ribosomal protein bL35 family.

The chain is Large ribosomal subunit protein bL35 from Polaromonas naphthalenivorans (strain CJ2).